Here is a 353-residue protein sequence, read N- to C-terminus: UPF0283 membrane protein YcjF (353 aa).

Residues 1–69 (MTEPLKPRID…LRPKRSLWRK (69 aa)) lie on the Periplasmic side of the membrane. Residues 70–90 (MVMGGLALFGASVVGQGVQWT) traverse the membrane as a helical segment. Residues 91-99 (MNAWQTQDW) lie on the Cytoplasmic side of the membrane. A helical transmembrane segment spans residues 100–120 (VALGGCAAGALIIGAGVGSVV). Residues 121-212 (TEWRRLWRLR…ARREISRSAA (92 aa)) are Periplasmic-facing. Residues 213-233 (ESTLMIAVSPLALVDMAFIAW) form a helical membrane-spanning segment. At 234-353 (RNLRLINRIA…LQKGKTPSEK (120 aa)) the chain is on the cytoplasmic side.

It belongs to the UPF0283 family.

The protein localises to the cell inner membrane. The protein is UPF0283 membrane protein YcjF (ycjF) of Escherichia coli O157:H7.